A 317-amino-acid chain; its full sequence is MPVQGSQRRLLGSLNSTPTATPHLGLAANQTGARCLEVSVPDGLFLSLGLVSLVENVLVVTAIAKNRNLHSPMYCFICCLALSDLLVSGSNMLETAVTLLLEAGALAARAAVVQQLDNVIDVITCSSMLSSLCFLGAIAVDRYISIFYALRYHSIVTLPRARRAVAAIWVASVLFSTLFIAYYDHAAVLLCLVIFFLAMLVLMAVLYVHMLARACQHAQGIARLHKRQRLAHQGFGLKGAATLTILLGIFFLCWGPFFLHLTLIVLCPQHPTCSCIFKNFNLFLALIICNAIIDPLIYAFRSQELRRTLKEVLLCSW.

Over 1–37 (MPVQGSQRRLLGSLNSTPTATPHLGLAANQTGARCLE) the chain is Extracellular. Asparagine 29 is a glycosylation site (N-linked (GlcNAc...) asparagine). Residues 38 to 63 (VSVPDGLFLSLGLVSLVENVLVVTAI) form a helical membrane-spanning segment. Over 64–72 (AKNRNLHSP) the chain is Cytoplasmic. A helical membrane pass occupies residues 73 to 93 (MYCFICCLALSDLLVSGSNML). Topologically, residues 94 to 118 (ETAVTLLLEAGALAARAAVVQQLDN) are extracellular. Residues 119–140 (VIDVITCSSMLSSLCFLGAIAV) form a helical membrane-spanning segment. At 141–163 (DRYISIFYALRYHSIVTLPRARR) the chain is on the cytoplasmic side. A helical transmembrane segment spans residues 164 to 183 (AVAAIWVASVLFSTLFIAYY). At 184 to 191 (DHAAVLLC) the chain is on the extracellular side. A helical transmembrane segment spans residues 192–211 (LVIFFLAMLVLMAVLYVHML). Residues 212–240 (ARACQHAQGIARLHKRQRLAHQGFGLKGA) lie on the Cytoplasmic side of the membrane. Residues 241-266 (ATLTILLGIFFLCWGPFFLHLTLIVL) form a helical membrane-spanning segment. Residues 267-279 (CPQHPTCSCIFKN) lie on the Extracellular side of the membrane. A helical membrane pass occupies residues 280–300 (FNLFLALIICNAIIDPLIYAF). The Cytoplasmic segment spans residues 301 to 317 (RSQELRRTLKEVLLCSW). Residue cysteine 315 is the site of S-palmitoyl cysteine attachment.

It belongs to the G-protein coupled receptor 1 family. As to quaternary structure, interacts with MGRN1, but does not undergo MGRN1-mediated ubiquitination; this interaction competes with GNAS-binding and thus inhibits agonist-induced cAMP production. Interacts with OPN3; the interaction results in a decrease in MC1R-mediated cAMP signaling and ultimately a decrease in melanin production in melanocytes.

The protein resides in the cell membrane. Receptor for MSH (alpha, beta and gamma) and ACTH. The activity of this receptor is mediated by G proteins which activate adenylate cyclase. Mediates melanogenesis, the production of eumelanin (black/brown) and phaeomelanin (red/yellow), via regulation of cAMP signaling in melanocytes. This is Melanocyte-stimulating hormone receptor (MC1R) from Papio hamadryas (Hamadryas baboon).